The chain runs to 1013 residues: Putative DNA polymerase 060R (1013 aa).

Belongs to the DNA polymerase type-B family.

It catalyses the reaction DNA(n) + a 2'-deoxyribonucleoside 5'-triphosphate = DNA(n+1) + diphosphate. In terms of biological role, DNA-directed DNA polymerase involved in viral DNA replication. This is Putative DNA polymerase 060R from Dryophytes versicolor (chameleon treefrog).